Here is a 249-residue protein sequence, read N- to C-terminus: Cysteine-rich secretory protein 1 (249 aa).

Residues 1-20 (MEIKHLLFLVAAACLLPVLS) form the signal peptide. The SCP domain occupies 45–175 (VNIHNTLRRG…SPRYFYVCHY (131 aa)). A glycan (N-linked (GlcNAc...) asparagine) is linked at N104. Intrachain disulfides connect C195-C202, C198-C207, C211-C244, C220-C238, and C229-C242. Residues 211-244 (CIYYDEYTDCSLEVRFLGCNHSTPRMFCKATCLC) enclose the ShKT domain. N-linked (GlcNAc...) asparagine glycosylation occurs at N230.

The protein belongs to the CRISP family. In terms of tissue distribution, expressed in all the regions of the epididymis except the caput and is not detected in the testis, prostate, seminal vesicle, and brain.

May have a role in sperm-egg fusion and maturation. The polypeptide is Cysteine-rich secretory protein 1 (CRISP1) (Macaca mulatta (Rhesus macaque)).